We begin with the raw amino-acid sequence, 197 residues long: Zinc finger protein 581 (197 aa).

The span at 1–10 shows a compositional bias: pro residues; the sequence is MLVLPSPCPQ. The interval 1-52 is disordered; sequence MLVLPSPCPQPLAFSSVETMEGPPRRTCRSPEPGPSSSIGSPQASSPPRPNH. The span at 35 to 44 shows a compositional bias: low complexity; that stretch reads PSSSIGSPQA. C2H2-type zinc fingers lie at residues 87–109, 115–137, 145–167, and 173–196; these read YSCPVCSRVFEYMSYLQRHSITH, FECDICGKAFKRASHLARHHSIH, HGCPLCPRRFRDAGELAQHSRVH, and FQCPHCPRRFMEQNTLQKHTRWKH.

It localises to the nucleus. Functionally, may be involved in transcriptional regulation. The polypeptide is Zinc finger protein 581 (ZNF581) (Homo sapiens (Human)).